Here is a 215-residue protein sequence, read N- to C-terminus: Nascent polypeptide-associated complex subunit alpha (215 aa).

Residues 1 to 81 (MPGEATETVP…SEKKARKAMS (81 aa)) form a disordered region. The segment covering 9–28 (VPATEQELPQPQAETGSGTE) has biased composition (polar residues). Residues 29–42 (SDSDESVPELEEQD) are compositionally biased toward acidic residues. The residue at position 43 (Ser43) is a Phosphoserine; by ILK1. Over residues 44-57 (TQTATQQAQLAAAA) the composition is skewed to low complexity. Residues 69–80 (QSRSEKKARKAM) form a required for DNA-binding region. Positions 70-135 (SRSEKKARKA…AKIEDLSQQA (66 aa)) constitute an NAC-A/B domain. Residues 93 to 108 (RVTIRKSKNILFVITK) are RNA/DNA-binding. At Ser132 the chain carries Phosphoserine. An N6-acetyllysine; alternate modification is found at Lys142. Residue Lys142 forms a Glycyl lysine isopeptide (Lys-Gly) (interchain with G-Cter in SUMO2); alternate linkage. Thr159 is modified (phosphothreonine; by GSK3-beta). Phosphothreonine is present on Thr161. Phosphoserine is present on residues Ser166, Ser186, Ser191, and Ser203. In terms of domain architecture, UBA spans 176-213 (VEVKDIELVMSQANVSRAKAVRALKNNSNDIVNAIMEL).

Belongs to the NAC-alpha family. As to quaternary structure, part of the nascent polypeptide-associated complex (NAC), which is a heterodimer of NACA and BTF3 (via NAC-A/B domains). NAC associates with ribosomes through the BTF3/NACB subunit and contacts the ribosomal protein L23, which is positioned near the exiting site. Both subunits can contact nascent polypeptide chains. NACA may also form homodimers, and only this form binds DNA. Interacts with TBP and JUN. Phosphorylation of Ser-43 by ILK during cell adhesion may promote nuclear localization. Phosphorylation of Thr-159 by GSK3B may promote proteasome mediated degradation. Isoform 1 appears to be ubiquitously expressed.

Its subcellular location is the cytoplasm. It is found in the nucleus. Its function is as follows. Prevents inappropriate targeting of non-secretory polypeptides to the endoplasmic reticulum (ER). Binds to nascent polypeptide chains as they emerge from the ribosome and blocks their interaction with the signal recognition particle (SRP), which normally targets nascent secretory peptides to the ER. Also reduces the inherent affinity of ribosomes for protein translocation sites in the ER membrane (M sites). Isoform 1 and isoform 2 appear to bind DNA and play roles in transcription. Isoform 1 may function as a specific coactivator for JUN, acting to stabilize the interaction of JUN homodimers with promoter elements. This Mus musculus (Mouse) protein is Nascent polypeptide-associated complex subunit alpha (Naca).